A 341-amino-acid chain; its full sequence is UDP-N-acetyl-alpha-D-glucosaminouronate 4-epimerase (341 aa).

Positions 27, 28, 47, 50, 51, 52, 78, 79, and 98 each coordinate NAD(+). Ser-103 is a UDP-N-acetyl-alpha-D-galactosamine binding site. Thr-117 provides a ligand contact to NAD(+). UDP-N-acetyl-alpha-D-galactosamine is bound by residues Ser-142, Ser-143, and Tyr-166. Residues Tyr-166 and Lys-170 each contribute to the NAD(+) site. Tyr-166 functions as the Proton acceptor in the catalytic mechanism. Residue Asn-195 coordinates UDP-N-acetyl-alpha-D-galactosamine. Val-196 contributes to the NAD(+) binding site. The UDP-N-acetyl-alpha-D-galactosamine site is built by Val-210, Tyr-225, Asn-227, Arg-234, Arg-299, and Asp-302.

Belongs to the NAD(P)-dependent epimerase/dehydratase family. In terms of assembly, homodimer. NAD(+) serves as cofactor.

The enzyme catalyses UDP-2-acetamido-2-deoxy-alpha-D-glucuronate = UDP-2-acetamido-2-deoxy-alpha-D-galacturonate. It carries out the reaction UDP-N-acetyl-alpha-D-glucosamine = UDP-N-acetyl-alpha-D-galactosamine. Its pathway is bacterial outer membrane biogenesis; LPS O-antigen biosynthesis. In terms of biological role, epimerase required for the biosynthesis of the B-band O antigen of serotype O6 lipopolysaccharide. Catalyzes the reversible epimerization of UDP-N-acetylglucosaminuronic acid (UDP-GlcNAcA) to UDP-N-acetylgalactosaminuronic acid (UDP-GalNAcA). Also catalyzes the reversible epimerization of UDP-N-acetylglucosamine (UDP-GlcNAc) to UDP-N-acetylgalactosamine (UDP-GalNAc). Has very low epimerase activity with UDP-glucose (UDP-Glc) and UDP-galactose (UDP-Gal). The sequence is that of UDP-N-acetyl-alpha-D-glucosaminouronate 4-epimerase from Pseudomonas aeruginosa.